A 141-amino-acid polypeptide reads, in one-letter code: Hemoglobin subunit alpha (141 aa).

The Globin domain occupies 1–141 (VLSAADKTNV…VSTVLTSKYR (141 aa)). A Phosphoserine modification is found at serine 3. Lysine 7 is modified (N6-succinyllysine). At threonine 8 the chain carries Phosphothreonine. The residue at position 11 (lysine 11) is an N6-succinyllysine. Residue lysine 16 is modified to N6-acetyllysine; alternate. The residue at position 16 (lysine 16) is an N6-succinyllysine; alternate. Serine 35 is subject to Phosphoserine. Lysine 40 bears the N6-succinyllysine mark. Serine 49 bears the Phosphoserine mark. Histidine 58 serves as a coordination point for O2. Histidine 87 serves as a coordination point for heme b. Phosphoserine is present on serine 102. Phosphothreonine is present on threonine 108. Phosphoserine is present on residues serine 124 and serine 131. Phosphothreonine occurs at positions 134 and 137. Serine 138 bears the Phosphoserine mark.

The protein belongs to the globin family. Heterotetramer of two alpha chains and two beta chains. In terms of tissue distribution, red blood cells.

In terms of biological role, involved in oxygen transport from the lung to the various peripheral tissues. This chain is Hemoglobin subunit alpha, found in Sciurus carolinensis (Eastern gray squirrel).